The primary structure comprises 509 residues: Bifunctional purine biosynthesis protein PurH (509 aa).

Positions 1–144 (MKRALISVSD…KNYAAVTVVV (144 aa)) constitute an MGS-like domain.

Belongs to the PurH family.

The enzyme catalyses (6R)-10-formyltetrahydrofolate + 5-amino-1-(5-phospho-beta-D-ribosyl)imidazole-4-carboxamide = 5-formamido-1-(5-phospho-D-ribosyl)imidazole-4-carboxamide + (6S)-5,6,7,8-tetrahydrofolate. The catalysed reaction is IMP + H2O = 5-formamido-1-(5-phospho-D-ribosyl)imidazole-4-carboxamide. It participates in purine metabolism; IMP biosynthesis via de novo pathway; 5-formamido-1-(5-phospho-D-ribosyl)imidazole-4-carboxamide from 5-amino-1-(5-phospho-D-ribosyl)imidazole-4-carboxamide (10-formyl THF route): step 1/1. The protein operates within purine metabolism; IMP biosynthesis via de novo pathway; IMP from 5-formamido-1-(5-phospho-D-ribosyl)imidazole-4-carboxamide: step 1/1. This is Bifunctional purine biosynthesis protein PurH from Listeria monocytogenes serovar 1/2a (strain ATCC BAA-679 / EGD-e).